The chain runs to 148 residues: Putative pre-16S rRNA nuclease (148 aa).

It belongs to the YqgF nuclease family.

The protein localises to the cytoplasm. Could be a nuclease involved in processing of the 5'-end of pre-16S rRNA. The chain is Putative pre-16S rRNA nuclease from Chlamydia trachomatis serovar A (strain ATCC VR-571B / DSM 19440 / HAR-13).